We begin with the raw amino-acid sequence, 96 residues long: Beta-defensin 132 (96 aa).

A signal peptide spans 1 to 22; the sequence is MKFLLLVLAALRFLTQVIPASG. 3 disulfide bridges follow: C27-C55, C35-C49, and C39-C56. The disordered stretch occupies residues 74–96; it reads HWQSRRRNTQRKDKKQQTTVTSS. Over residues 76–87 the composition is skewed to basic residues; that stretch reads QSRRRNTQRKDK.

Belongs to the beta-defensin family.

It localises to the secreted. Functionally, has antibacterial activity. The polypeptide is Beta-defensin 132 (DEFB132) (Hylobates lar (Lar gibbon)).